The primary structure comprises 113 residues: Protein translation factor SUI1 homolog (113 aa).

It belongs to the SUI1 family.

Functionally, probably involved in translation. The sequence is that of Protein translation factor SUI1 homolog from Salix bakko (Japanese willow).